The chain runs to 433 residues: Putative wall-associated receptor kinase-like 16 (433 aa).

An N-terminal signal peptide occupies residues 1 to 22 (MKLQHVVYLVAIFFVVAIFVIA). Residues 23–29 (CIEENKY) lie on the Extracellular side of the membrane. Residues 30 to 50 (LVWIMIILANTTNILSLVRSI) traverse the membrane as a helical segment. At 51–433 (SYIKNIRKHQ…VARFDIEAGR (383 aa)) the chain is on the cytoplasmic side. Residue T97 is modified to Phosphothreonine. The Protein kinase domain occupies 108–391 (YDVSRILGQG…RAKTTKHNWL (284 aa)). Residues 114 to 122 (LGQGGQWTV) and K136 each bind ATP. Y181 carries the post-translational modification Phosphotyrosine. The Proton acceptor role is filled by D233. Phosphothreonine is present on residues T267 and T272. Y280 is modified (phosphotyrosine).

This sequence belongs to the protein kinase superfamily. Ser/Thr protein kinase family.

Its subcellular location is the membrane. The enzyme catalyses L-seryl-[protein] + ATP = O-phospho-L-seryl-[protein] + ADP + H(+). It catalyses the reaction L-threonyl-[protein] + ATP = O-phospho-L-threonyl-[protein] + ADP + H(+). Functionally, putative serine/threonine-protein kinase that may function as a signaling receptor of extracellular matrix component. The chain is Putative wall-associated receptor kinase-like 16 (WAKL16) from Arabidopsis thaliana (Mouse-ear cress).